We begin with the raw amino-acid sequence, 728 residues long: Homoaconitase, mitochondrial (728 aa).

The N-terminal 24 residues, Met-1–Tyr-24, are a transit peptide targeting the mitochondrion. Residues Cys-362, Cys-422, and Cys-425 each coordinate [4Fe-4S] cluster.

Belongs to the aconitase/IPM isomerase family. Requires [4Fe-4S] cluster as cofactor.

The protein resides in the mitochondrion. The enzyme catalyses (2R,3S)-homoisocitrate = cis-homoaconitate + H2O. It participates in amino-acid biosynthesis; L-lysine biosynthesis via AAA pathway; L-alpha-aminoadipate from 2-oxoglutarate: step 3/5. Functionally, catalyzes the reversible hydration of cis-homoaconitate to (2R,3S)-homoisocitrate, a step in the alpha-aminoadipate pathway for lysine biosynthesis. In Cryptococcus neoformans var. neoformans serotype D (strain B-3501A) (Filobasidiella neoformans), this protein is Homoaconitase, mitochondrial (LYS4).